The primary structure comprises 882 residues: Valine--tRNA ligase (882 aa).

The short motif at 45–55 (PNVTGSLHIGH) is the 'HIGH' region element. Positions 525 to 529 (KFSKS) match the 'KMSKS' region motif. Lys-528 contributes to the ATP binding site. Positions 812 to 881 (EGLIDVAKEK…VLKKGIQNLA (70 aa)) form a coiled coil.

The protein belongs to the class-I aminoacyl-tRNA synthetase family. ValS type 1 subfamily. In terms of assembly, monomer.

It localises to the cytoplasm. It carries out the reaction tRNA(Val) + L-valine + ATP = L-valyl-tRNA(Val) + AMP + diphosphate. Functionally, catalyzes the attachment of valine to tRNA(Val). As ValRS can inadvertently accommodate and process structurally similar amino acids such as threonine, to avoid such errors, it has a 'posttransfer' editing activity that hydrolyzes mischarged Thr-tRNA(Val) in a tRNA-dependent manner. This is Valine--tRNA ligase from Leptospira interrogans serogroup Icterohaemorrhagiae serovar Lai (strain 56601).